The primary structure comprises 396 residues: NADH-quinone oxidoreductase subunit D 1 (396 aa).

It belongs to the complex I 49 kDa subunit family. In terms of assembly, NDH-1 is composed of 14 different subunits. Subunits NuoB, C, D, E, F, and G constitute the peripheral sector of the complex.

It localises to the cell inner membrane. It carries out the reaction a quinone + NADH + 5 H(+)(in) = a quinol + NAD(+) + 4 H(+)(out). NDH-1 shuttles electrons from NADH, via FMN and iron-sulfur (Fe-S) centers, to quinones in the respiratory chain. The immediate electron acceptor for the enzyme in this species is believed to be ubiquinone. Couples the redox reaction to proton translocation (for every two electrons transferred, four hydrogen ions are translocated across the cytoplasmic membrane), and thus conserves the redox energy in a proton gradient. The sequence is that of NADH-quinone oxidoreductase subunit D 1 from Nitrobacter hamburgensis (strain DSM 10229 / NCIMB 13809 / X14).